The primary structure comprises 84 residues: U21-theraphotoxin-Cg1c (84 aa).

The signal sequence occupies residues 1-21 (MKVSVLITLAVLGVMFLLTSA). A propeptide spanning residues 22–47 (EERGSDQMDSPAWLKSMERIFQSEER) is cleaved from the precursor. 3 disulfides stabilise this stretch: cysteine 49–cysteine 63, cysteine 56–cysteine 68, and cysteine 62–cysteine 76.

Belongs to the neurotoxin 10 (Hwtx-1) family. 05 (F4a) subfamily. In terms of tissue distribution, expressed by the venom gland.

Its subcellular location is the secreted. Functionally, probable ion channel inhibitor. The chain is U21-theraphotoxin-Cg1c from Chilobrachys guangxiensis (Chinese earth tiger tarantula).